The chain runs to 169 residues: Peptide deformylase (169 aa).

The Fe cation site is built by Cys91 and His133. The active site involves Glu134. Residue His137 participates in Fe cation binding.

Belongs to the polypeptide deformylase family. It depends on Fe(2+) as a cofactor.

The catalysed reaction is N-terminal N-formyl-L-methionyl-[peptide] + H2O = N-terminal L-methionyl-[peptide] + formate. Functionally, removes the formyl group from the N-terminal Met of newly synthesized proteins. Requires at least a dipeptide for an efficient rate of reaction. N-terminal L-methionine is a prerequisite for activity but the enzyme has broad specificity at other positions. The polypeptide is Peptide deformylase (Haemophilus influenzae (strain 86-028NP)).